A 191-amino-acid chain; its full sequence is Thymidine kinase (191 aa).

ATP contacts are provided by residues 15 to 22 (GPMYSGKT) and 88 to 91 (DEAQ). The active-site Proton acceptor is the Glu89. Zn(2+) contacts are provided by Cys145, Cys148, Cys183, and Cys186.

This sequence belongs to the thymidine kinase family. As to quaternary structure, homotetramer.

It localises to the cytoplasm. The catalysed reaction is thymidine + ATP = dTMP + ADP + H(+). This Clostridium botulinum (strain Loch Maree / Type A3) protein is Thymidine kinase.